A 251-amino-acid polypeptide reads, in one-letter code: 3-deoxy-manno-octulosonate cytidylyltransferase (251 aa).

Belongs to the KdsB family.

It localises to the cytoplasm. It catalyses the reaction 3-deoxy-alpha-D-manno-oct-2-ulosonate + CTP = CMP-3-deoxy-beta-D-manno-octulosonate + diphosphate. It participates in nucleotide-sugar biosynthesis; CMP-3-deoxy-D-manno-octulosonate biosynthesis; CMP-3-deoxy-D-manno-octulosonate from 3-deoxy-D-manno-octulosonate and CTP: step 1/1. The protein operates within bacterial outer membrane biogenesis; lipopolysaccharide biosynthesis. Its function is as follows. Activates KDO (a required 8-carbon sugar) for incorporation into bacterial lipopolysaccharide in Gram-negative bacteria. The protein is 3-deoxy-manno-octulosonate cytidylyltransferase of Chelativorans sp. (strain BNC1).